The primary structure comprises 285 residues: Inhibitor of growth protein 5 (285 aa).

The segment at Glu116–Met225 is disordered. The span at Lys131–Ser149 shows a compositional bias: basic residues. Low complexity predominate over residues Asn160 to Gly178. The segment at Pro232–Asp281 adopts a PHD-type zinc-finger fold. Zn(2+)-binding residues include Cys235, Cys237, Cys248, Cys253, His259, Cys262, Cys275, and Cys278.

It belongs to the ING family. In terms of assembly, component of the Enok complex composed of at least Br140, enok, Eaf6 and Ing5.

Its subcellular location is the nucleus. It localises to the chromosome. Functionally, component of the Enok complex which has a histone H3 acetyltransferase activity. The sequence is that of Inhibitor of growth protein 5 from Drosophila melanogaster (Fruit fly).